The following is a 299-amino-acid chain: Oxygen-dependent coproporphyrinogen-III oxidase (299 aa).

Ser92 is a binding site for substrate. Residues His96 and His106 each coordinate a divalent metal cation. His106 acts as the Proton donor in catalysis. 108-110 lines the substrate pocket; the sequence is NVR. His145 and His175 together coordinate a divalent metal cation. An important for dimerization region spans residues 240 to 275; that stretch reads YVEFNLVWDRGTLFGLQTGGRTESILMSMPPLVRWE. 258–260 is a substrate binding site; sequence GGR.

The protein belongs to the aerobic coproporphyrinogen-III oxidase family. As to quaternary structure, homodimer. A divalent metal cation is required as a cofactor.

It localises to the cytoplasm. It carries out the reaction coproporphyrinogen III + O2 + 2 H(+) = protoporphyrinogen IX + 2 CO2 + 2 H2O. It functions in the pathway porphyrin-containing compound metabolism; protoporphyrin-IX biosynthesis; protoporphyrinogen-IX from coproporphyrinogen-III (O2 route): step 1/1. In terms of biological role, involved in the heme biosynthesis. Catalyzes the aerobic oxidative decarboxylation of propionate groups of rings A and B of coproporphyrinogen-III to yield the vinyl groups in protoporphyrinogen-IX. The protein is Oxygen-dependent coproporphyrinogen-III oxidase of Salmonella newport (strain SL254).